Reading from the N-terminus, the 429-residue chain is Serine--tRNA ligase (429 aa).

236 to 238 (TAE) contributes to the L-serine binding site. ATP is bound at residue 267–269 (RSE). An L-serine-binding site is contributed by E290. 354-357 (EISS) is an ATP binding site. S390 contributes to the L-serine binding site.

The protein belongs to the class-II aminoacyl-tRNA synthetase family. Type-1 seryl-tRNA synthetase subfamily. As to quaternary structure, homodimer. The tRNA molecule binds across the dimer.

The protein localises to the cytoplasm. It catalyses the reaction tRNA(Ser) + L-serine + ATP = L-seryl-tRNA(Ser) + AMP + diphosphate + H(+). It carries out the reaction tRNA(Sec) + L-serine + ATP = L-seryl-tRNA(Sec) + AMP + diphosphate + H(+). It functions in the pathway aminoacyl-tRNA biosynthesis; selenocysteinyl-tRNA(Sec) biosynthesis; L-seryl-tRNA(Sec) from L-serine and tRNA(Sec): step 1/1. Catalyzes the attachment of serine to tRNA(Ser). Is also able to aminoacylate tRNA(Sec) with serine, to form the misacylated tRNA L-seryl-tRNA(Sec), which will be further converted into selenocysteinyl-tRNA(Sec). The polypeptide is Serine--tRNA ligase (Alcanivorax borkumensis (strain ATCC 700651 / DSM 11573 / NCIMB 13689 / SK2)).